Consider the following 190-residue polypeptide: Probable DNA replication complex GINS protein PSF2 (190 aa).

The protein belongs to the GINS2/PSF2 family. Component of the GINS complex which is a heterotetramer of gins1, gins2, gins3 and gins4.

It is found in the nucleus. Functionally, the GINS complex plays an essential role in the initiation of DNA replication. The polypeptide is Probable DNA replication complex GINS protein PSF2 (Brugia malayi (Filarial nematode worm)).